Here is a 230-residue protein sequence, read N- to C-terminus: Cytochrome c oxidase subunit 2 (230 aa).

The Mitochondrial intermembrane segment spans residues 1–14 (MAHPSQLGFQDAAS). The chain crosses the membrane as a helical span at residues 15-45 (PVMEELLHFHDHTLMIVFLISTLVLYIIMAM). The Mitochondrial matrix portion of the chain corresponds to 46–59 (VSTKLTNKYILDSQ). The chain crosses the membrane as a helical span at residues 60–87 (EIEIVWTILPAVILIMIALPSLRILYLM). Topologically, residues 88 to 230 (DEINDPHLTI…SWSSLMLEEA (143 aa)) are mitochondrial intermembrane. Residues histidine 161, cysteine 196, glutamate 198, cysteine 200, histidine 204, and methionine 207 each contribute to the Cu cation site. Glutamate 198 is a binding site for Mg(2+).

This sequence belongs to the cytochrome c oxidase subunit 2 family. As to quaternary structure, component of the cytochrome c oxidase (complex IV, CIV), a multisubunit enzyme composed of 14 subunits. The complex is composed of a catalytic core of 3 subunits MT-CO1, MT-CO2 and MT-CO3, encoded in the mitochondrial DNA, and 11 supernumerary subunits COX4I, COX5A, COX5B, COX6A, COX6B, COX6C, COX7A, COX7B, COX7C, COX8 and NDUFA4, which are encoded in the nuclear genome. The complex exists as a monomer or a dimer and forms supercomplexes (SCs) in the inner mitochondrial membrane with NADH-ubiquinone oxidoreductase (complex I, CI) and ubiquinol-cytochrome c oxidoreductase (cytochrome b-c1 complex, complex III, CIII), resulting in different assemblies (supercomplex SCI(1)III(2)IV(1) and megacomplex MCI(2)III(2)IV(2)). Found in a complex with TMEM177, COA6, COX18, COX20, SCO1 and SCO2. Interacts with TMEM177 in a COX20-dependent manner. Interacts with COX20. Interacts with COX16. The cofactor is Cu cation.

It localises to the mitochondrion inner membrane. It carries out the reaction 4 Fe(II)-[cytochrome c] + O2 + 8 H(+)(in) = 4 Fe(III)-[cytochrome c] + 2 H2O + 4 H(+)(out). Its function is as follows. Component of the cytochrome c oxidase, the last enzyme in the mitochondrial electron transport chain which drives oxidative phosphorylation. The respiratory chain contains 3 multisubunit complexes succinate dehydrogenase (complex II, CII), ubiquinol-cytochrome c oxidoreductase (cytochrome b-c1 complex, complex III, CIII) and cytochrome c oxidase (complex IV, CIV), that cooperate to transfer electrons derived from NADH and succinate to molecular oxygen, creating an electrochemical gradient over the inner membrane that drives transmembrane transport and the ATP synthase. Cytochrome c oxidase is the component of the respiratory chain that catalyzes the reduction of oxygen to water. Electrons originating from reduced cytochrome c in the intermembrane space (IMS) are transferred via the dinuclear copper A center (CU(A)) of subunit 2 and heme A of subunit 1 to the active site in subunit 1, a binuclear center (BNC) formed by heme A3 and copper B (CU(B)). The BNC reduces molecular oxygen to 2 water molecules using 4 electrons from cytochrome c in the IMS and 4 protons from the mitochondrial matrix. The chain is Cytochrome c oxidase subunit 2 (MT-CO2) from Squalus acanthias (Spiny dogfish).